The following is a 692-amino-acid chain: Elongation factor G (692 aa).

In terms of domain architecture, tr-type G spans 8 to 282 (EKTRNIGIMA…AVLDYLPAPT (275 aa)). GTP is bound by residues 17–24 (AHIDAGKT), 81–85 (DTPGH), and 135–138 (NKMD).

Belongs to the TRAFAC class translation factor GTPase superfamily. Classic translation factor GTPase family. EF-G/EF-2 subfamily.

The protein localises to the cytoplasm. Catalyzes the GTP-dependent ribosomal translocation step during translation elongation. During this step, the ribosome changes from the pre-translocational (PRE) to the post-translocational (POST) state as the newly formed A-site-bound peptidyl-tRNA and P-site-bound deacylated tRNA move to the P and E sites, respectively. Catalyzes the coordinated movement of the two tRNA molecules, the mRNA and conformational changes in the ribosome. This is Elongation factor G from Bacillus velezensis (strain DSM 23117 / BGSC 10A6 / LMG 26770 / FZB42) (Bacillus amyloliquefaciens subsp. plantarum).